A 1079-amino-acid polypeptide reads, in one-letter code: Tudor domain-containing protein 7A (1079 aa).

Residues 3-76 (DVELVKKMLR…TGEVMCFAGV (74 aa)) form the HTH OST-type 1 domain. Residues 153 to 175 (LPSSRAPAWQMNRKSPVPEKTSV) form a disordered region. HTH OST-type domains follow at residues 205–270 (DVEL…RLVY) and 366–434 (LTTE…ILYT). Tudor domains lie at 519 to 576 (SPKI…FMTL) and 708 to 765 (RPFC…FLKE).

It belongs to the TDRD7 family.

The protein resides in the cytoplasm. Component of specific cytoplasmic RNA granules involved in post-transcriptional regulation of specific genes: probably acts by binding to specific mRNAs and regulating their translation. Probably required during spermatogenesis. Required for structural integrity of granules in primordial germ cells (PGCs). This chain is Tudor domain-containing protein 7A (tdrd7a), found in Danio rerio (Zebrafish).